Consider the following 123-residue polypeptide: Fluoride-specific ion channel FluC (123 aa).

4 consecutive transmembrane segments (helical) span residues 7–27, 39–59, 68–88, and 101–121; these read LAVA…SGLL, MVNG…FWGF, FLGT…YETF, and LNVA…FLLA. Positions 75 and 78 each coordinate Na(+).

The protein belongs to the fluoride channel Fluc/FEX (TC 1.A.43) family.

It is found in the cell membrane. The catalysed reaction is fluoride(in) = fluoride(out). With respect to regulation, na(+) is not transported, but it plays an essential structural role and its presence is essential for fluoride channel function. Functionally, fluoride-specific ion channel. Important for reducing fluoride concentration in the cell, thus reducing its toxicity. The protein is Fluoride-specific ion channel FluC of Thermococcus gammatolerans (strain DSM 15229 / JCM 11827 / EJ3).